A 448-amino-acid chain; its full sequence is Tubulin beta chain (448 aa).

Residues glutamine 11, glutamate 69, serine 138, glycine 142, threonine 143, glycine 144, asparagine 204, and asparagine 226 each coordinate GTP. Glutamate 69 is a Mg(2+) binding site. The interval serine 429–glutamate 448 is disordered. Over residues aspartate 432–glutamate 448 the composition is skewed to acidic residues.

The protein belongs to the tubulin family. Dimer of alpha and beta chains. A typical microtubule is a hollow water-filled tube with an outer diameter of 25 nm and an inner diameter of 15 nM. Alpha-beta heterodimers associate head-to-tail to form protofilaments running lengthwise along the microtubule wall with the beta-tubulin subunit facing the microtubule plus end conferring a structural polarity. Microtubules usually have 13 protofilaments but different protofilament numbers can be found in some organisms and specialized cells. It depends on Mg(2+) as a cofactor.

The protein localises to the cytoplasm. It is found in the cytoskeleton. Functionally, tubulin is the major constituent of microtubules, a cylinder consisting of laterally associated linear protofilaments composed of alpha- and beta-tubulin heterodimers. Microtubules grow by the addition of GTP-tubulin dimers to the microtubule end, where a stabilizing cap forms. Below the cap, tubulin dimers are in GDP-bound state, owing to GTPase activity of alpha-tubulin. This is Tubulin beta chain from Aspergillus fumigatus (strain ATCC MYA-4609 / CBS 101355 / FGSC A1100 / Af293) (Neosartorya fumigata).